The following is a 115-amino-acid chain: NADH-ubiquinone oxidoreductase chain 3 (115 aa).

The next 3 membrane-spanning stretches (helical) occupy residues 4-24 (IMAMLANISISSCLIIIAFWL), 55-75 (FFLVGITFLLFDLEIALLLPL), and 84-104 (MFLTTLTSFILVSVLALGLAY).

It belongs to the complex I subunit 3 family. As to quaternary structure, core subunit of respiratory chain NADH dehydrogenase (Complex I) which is composed of 45 different subunits. Interacts with TMEM186. Interacts with TMEM242.

Its subcellular location is the mitochondrion inner membrane. The catalysed reaction is a ubiquinone + NADH + 5 H(+)(in) = a ubiquinol + NAD(+) + 4 H(+)(out). Core subunit of the mitochondrial membrane respiratory chain NADH dehydrogenase (Complex I) which catalyzes electron transfer from NADH through the respiratory chain, using ubiquinone as an electron acceptor. Essential for the catalytic activity of complex I. The protein is NADH-ubiquinone oxidoreductase chain 3 of Phyllotis darwinii (Darwin's leaf-eared mouse).